We begin with the raw amino-acid sequence, 257 residues long: Non-homologous end joining protein Ku (257 aa).

Residues T9–E184 enclose the Ku domain.

This sequence belongs to the prokaryotic Ku family. As to quaternary structure, homodimer. Interacts with LigD.

Its function is as follows. With LigD forms a non-homologous end joining (NHEJ) DNA repair enzyme, which repairs dsDNA breaks with reduced fidelity. Binds linear dsDNA with 5'- and 3'- overhangs but not closed circular dsDNA nor ssDNA. Recruits and stimulates the ligase activity of LigD. This chain is Non-homologous end joining protein Ku, found in Lachnoclostridium phytofermentans (strain ATCC 700394 / DSM 18823 / ISDg) (Clostridium phytofermentans).